The following is a 319-amino-acid chain: Acetyl esterase (319 aa).

The short motif at 91 to 93 (HGG) is the Involved in the stabilization of the negatively charged intermediate by the formation of the oxyanion hole element. Residues Ser165, Asp262, and His292 contribute to the active site.

It belongs to the 'GDXG' lipolytic enzyme family. As to quaternary structure, homodimer. Interacts with MalT and MelA.

The protein resides in the cytoplasm. In terms of biological role, displays esterase activity towards short chain fatty esters (acyl chain length of up to 8 carbons). Able to hydrolyze triacetylglycerol (triacetin) and tributyrylglycerol (tributyrin), but not trioleylglycerol (triolein) or cholesterol oleate. Negatively regulates MalT activity by antagonizing maltotriose binding. Inhibits MelA galactosidase activity. The chain is Acetyl esterase from Shigella boydii serotype 18 (strain CDC 3083-94 / BS512).